A 91-amino-acid polypeptide reads, in one-letter code: Small ribosomal subunit protein uS19 (91 aa).

It belongs to the universal ribosomal protein uS19 family.

In terms of biological role, protein S19 forms a complex with S13 that binds strongly to the 16S ribosomal RNA. In Delftia acidovorans (strain DSM 14801 / SPH-1), this protein is Small ribosomal subunit protein uS19.